A 309-amino-acid polypeptide reads, in one-letter code: MSEINISAAAVKELREKTGAGMMDCKKALIETSGNFEKASDFLRKKGLAAAAKKAGRIASEGLTAAKVDGLTGVVIEVNSETDFVARNEQFQDLVKDIANFAVIAKTIDTLKTFKMQSGKSVEEEIIENIATIGENLTLRRMDILEISEGAIGSYVHNEVVPNLGKISVLVGLASNAKDKAKLEALAKQIAVHVAGNNPQSIDDSSLDQALIERERKVFFEKSKEEGKPDNIIAKMVEGRIRKFFSEVVLLQQNFLFEPKLTVAEVIKNAEKELGAEIKIAKFIRYELGEGIEHEEKNFADEVAAITQG.

The segment at 82 to 85 (TDFV) is involved in Mg(2+) ion dislocation from EF-Tu.

It belongs to the EF-Ts family.

It is found in the cytoplasm. Functionally, associates with the EF-Tu.GDP complex and induces the exchange of GDP to GTP. It remains bound to the aminoacyl-tRNA.EF-Tu.GTP complex up to the GTP hydrolysis stage on the ribosome. The sequence is that of Elongation factor Ts from Rickettsia peacockii (strain Rustic).